The chain runs to 1095 residues: DNA polymerase delta catalytic subunit (1095 aa).

Over residues 1–11 (MNRSGISKKRP) the composition is skewed to basic residues. A disordered region spans residues 1–37 (MNRSGISKKRPPPSNTPPPAGKHRATGDSTPSPAIGT). Zn(2+) is bound by residues cysteine 1007, cysteine 1010, cysteine 1020, and cysteine 1023. The segment at 1007 to 1023 (CVGCKVPISNGTLCASC) adopts a CysA-type zinc-finger fold. Cysteine 1052, cysteine 1055, cysteine 1065, and cysteine 1070 together coordinate [4Fe-4S] cluster. The CysB motif motif lies at 1052–1070 (CQECQGSLHQDVLCTSRDC).

Belongs to the DNA polymerase type-B family. As to quaternary structure, heterodimer with subunits of 125 kDa and 50 kDa. The 125 kDa subunit contains the polymerase active site and most likely the active site for the 3'-5' exonuclease activity. [4Fe-4S] cluster serves as cofactor.

It is found in the nucleus. The catalysed reaction is DNA(n) + a 2'-deoxyribonucleoside 5'-triphosphate = DNA(n+1) + diphosphate. Functionally, this polymerase possesses two enzymatic activities: DNA synthesis (polymerase) and an exonucleolytic activity that degrades single-stranded DNA in the 3'- to 5'-direction. This chain is DNA polymerase delta catalytic subunit (POLD1), found in Arabidopsis thaliana (Mouse-ear cress).